Consider the following 66-residue polypeptide: Large ribosomal subunit protein bL32 (66 aa).

This sequence belongs to the bacterial ribosomal protein bL32 family.

The polypeptide is Large ribosomal subunit protein bL32 (Rickettsia bellii (strain OSU 85-389)).